Consider the following 146-residue polypeptide: MKTYAQKASEVQREWYVIDATNQTLGRLATQIATLLRGKHKPTFSPYIDGGDFVIVVNAERIRLTGRKPEQKMYYRHSNYPGGFKAVSFKQLMAKHPERVLRFAVKGMLPKTRLGRQQLTKLKIYAGPKHPHAAQQPKVYEPRPRG.

The tract at residues 125–146 (YAGPKHPHAAQQPKVYEPRPRG) is disordered.

The protein belongs to the universal ribosomal protein uL13 family. Part of the 50S ribosomal subunit.

Functionally, this protein is one of the early assembly proteins of the 50S ribosomal subunit, although it is not seen to bind rRNA by itself. It is important during the early stages of 50S assembly. The chain is Large ribosomal subunit protein uL13 from Roseiflexus sp. (strain RS-1).